A 473-amino-acid chain; its full sequence is Chromosomal replication initiator protein DnaA (473 aa).

Residues 1–76 (MNYHSTNVNE…RTVLGRVIGP (76 aa)) form a domain I, interacts with DnaA modulators region. The domain II stretch occupies residues 76-135 (PNASLQYNALVDNSSPKYPGTVTLAGCADGGQAAEQFDVNLLHRHMPNAATHSEAQDFDT). A domain III, AAA+ region region spans residues 136 to 353 (QLNSRLNFRN…GTLVSLITNS (218 aa)). Gly-181, Gly-183, Lys-184, and Thr-185 together coordinate ATP. The segment at 354–473 (VVVGKEIDLT…VERAEQLIAN (120 aa)) is domain IV, binds dsDNA.

Belongs to the DnaA family. As to quaternary structure, oligomerizes as a right-handed, spiral filament on DNA at oriC.

The protein resides in the cytoplasm. Functionally, plays an essential role in the initiation and regulation of chromosomal replication. ATP-DnaA binds to the origin of replication (oriC) to initiate formation of the DNA replication initiation complex once per cell cycle. Binds the DnaA box (a 9 base pair repeat at the origin) and separates the double-stranded (ds)DNA. Forms a right-handed helical filament on oriC DNA; dsDNA binds to the exterior of the filament while single-stranded (ss)DNA is stabiized in the filament's interior. The ATP-DnaA-oriC complex binds and stabilizes one strand of the AT-rich DNA unwinding element (DUE), permitting loading of DNA polymerase. After initiation quickly degrades to an ADP-DnaA complex that is not apt for DNA replication. Binds acidic phospholipids. The polypeptide is Chromosomal replication initiator protein DnaA (Porphyromonas gingivalis (strain ATCC 33277 / DSM 20709 / CIP 103683 / JCM 12257 / NCTC 11834 / 2561)).